Consider the following 463-residue polypeptide: MTTETRSLFSQLPAIDRLLRDSAFLTLRETYGHTRVVDLLRQMVDEAREMIRATQALPAWCDNWACEADARLQKEAQSALRPVINLTGTVLHTNLGRALQAEEAVAAVSQAMRSPVTLEYDLDGAGRGHRDRALAELLCRITGAEDACIVNNNAAAVLLMLAATASGKEVVVSRGELVEIGGAFRIPDVMRQAGCALHEVGTTNRTHAKDYRQAVNENTALLMKVHTSNYSIEGFTKAVDEAELVSIGKELDIPVVTDLGSGSLVDLSQYGLPKEPMPQELIAAGVSLVSFSGDKLLGGPQAGIIVGKKEMIARLQSHPLKRALRADKMTLAALEATLRLYLHPEALSEKLPTLRLLTRQQEKIQVQGQRLLAPLLAHYGEEFAVAVMPCQSQIGSGSLPVDRLPSAALTFTPHDGRGSRLETLAARWRELPVPVIGRIYDGRLWLDLRCLEDETRFLEMLLK.

An N6-(pyridoxal phosphate)lysine modification is found at K295.

It belongs to the SelA family. As to quaternary structure, homodecamer; pentamer of dimers. Binds only one seryl-tRNA(Sec) per dimer. Requires pyridoxal 5'-phosphate as cofactor.

The protein resides in the cytoplasm. It catalyses the reaction L-seryl-tRNA(Sec) + selenophosphate + H(+) = L-selenocysteinyl-tRNA(Sec) + phosphate. It participates in aminoacyl-tRNA biosynthesis; selenocysteinyl-tRNA(Sec) biosynthesis; selenocysteinyl-tRNA(Sec) from L-seryl-tRNA(Sec) (bacterial route): step 1/1. Its function is as follows. Converts seryl-tRNA(Sec) to selenocysteinyl-tRNA(Sec) required for selenoprotein biosynthesis. This chain is L-seryl-tRNA(Sec) selenium transferase, found in Escherichia fergusonii (strain ATCC 35469 / DSM 13698 / CCUG 18766 / IAM 14443 / JCM 21226 / LMG 7866 / NBRC 102419 / NCTC 12128 / CDC 0568-73).